The chain runs to 611 residues: Glutathione hydrolase proenzyme 2 (611 aa).

Residues 1–42 (MSPTDTTPLLYSWDDQSRHQDPDWHKLRNYHGAWYRRISRRR) lie on the Cytoplasmic side of the membrane. A helical; Signal-anchor for type II membrane protein membrane pass occupies residues 43–63 (FSQFIFAFGLMTLFVLVYSIS). Over 64 to 611 (SNLHTPTQFT…PRKYGQAAAY (548 aa)) the chain is Lumenal. An N-linked (GlcNAc...) asparagine glycan is attached at Asn138. Position 147 (Arg147) interacts with L-glutamate. N-linked (GlcNAc...) asparagine glycans are attached at residues Asn153, Asn297, and Asn396. Thr420 acts as the Nucleophile in catalysis. Residues Thr438, Asn440, Gln459, Asp462, 490–491 (SS), and 512–513 (GG) each bind L-glutamate.

Belongs to the gamma-glutamyltransferase family. Heterodimer composed of the light and heavy chains. The active site is located in the light chain. In terms of processing, cleaved by autocatalysis into a large and a small subunit.

The protein resides in the vacuole membrane. The catalysed reaction is an N-terminal (5-L-glutamyl)-[peptide] + an alpha-amino acid = 5-L-glutamyl amino acid + an N-terminal L-alpha-aminoacyl-[peptide]. It catalyses the reaction glutathione + H2O = L-cysteinylglycine + L-glutamate. The enzyme catalyses an S-substituted glutathione + H2O = an S-substituted L-cysteinylglycine + L-glutamate. Its pathway is sulfur metabolism; glutathione metabolism. Its function is as follows. Catalyzes the transfer of the gamma-glutamyl moiety of glutathione (GSH) and other gamma-glutamyl compounds to amino acids and peptides. Major GSH-degrading enzyme, catalyzing the hydrolytic release of L-glutamate from GSH. Plays a role in the turnover of the vacuolar GSH, serving as an alternative nitrogen source during nitrogen starvation. The sequence is that of Glutathione hydrolase proenzyme 2 (ggt2) from Schizosaccharomyces pombe (strain 972 / ATCC 24843) (Fission yeast).